A 130-amino-acid polypeptide reads, in one-letter code: Mitochondrial pyruvate carrier 1 (130 aa).

The next 2 membrane-spanning stretches (helical) occupy residues Leu-23–Ile-45 and Ile-55–Val-77.

The protein belongs to the mitochondrial pyruvate carrier (MPC) (TC 2.A.105) family. The functional 150 kDa pyruvate import complex is a heteromer of MPC1 and either MPC2 or MPC3.

It localises to the mitochondrion. Its subcellular location is the mitochondrion inner membrane. In terms of biological role, mediates the uptake of pyruvate into mitochondria. This chain is Mitochondrial pyruvate carrier 1, found in Saccharomyces cerevisiae (strain ATCC 204508 / S288c) (Baker's yeast).